The sequence spans 452 residues: MDVVILAAGLGTRMKSSKPKVLHRILEKPIIDYVIDCAKSLNPFNSFVVINPSLKEVAEHLEKYNIKIVFQDEPKGTAHALLSALPYLSSDKILILNGDTPLLRKETLDSFIELFNKNGLDMALLSFYPQREHSYGRILRDGEQKIKKIVEITDFKDELMLSSEANSGIYILKREVAELVKEIKQNPNKGEFYLTDIVEIAVNKGFNIEAYPLAEENELIGINTRAELSLAMRYLRDRIVKGWMEKGITFYDPALVWISPSVTIGQDTIIYPNVFLEGDTKIGQNCLICQGVRIKNSIIEDNVQINDCTVIENSHIKSASKIGPFAHLRPDSIIGKGCRIGNFVEVKNSTIGDGTKAAHLSYIGDSEIGNNVNIGAGTITCNYDGQKKHKTIIEDNVFIGSDTQLVAPVKICKGAYIGAGSTITKEVPEDSLAISRTPQKNILGWAKKKRKQ.

The pyrophosphorylase stretch occupies residues 1-225; it reads MDVVILAAGL…ENELIGINTR (225 aa). UDP-N-acetyl-alpha-D-glucosamine is bound by residues 6-9, lysine 20, glutamine 71, and 76-77; these read LAAG and GT. Aspartate 99 contacts Mg(2+). 4 residues coordinate UDP-N-acetyl-alpha-D-glucosamine: glycine 136, glutamate 151, asparagine 166, and asparagine 223. Asparagine 223 lines the Mg(2+) pocket. Positions 226-246 are linker; the sequence is AELSLAMRYLRDRIVKGWMEK. The tract at residues 247-452 is N-acetyltransferase; it reads GITFYDPALV…LGWAKKKRKQ (206 aa). The UDP-N-acetyl-alpha-D-glucosamine site is built by arginine 329 and lysine 347. Histidine 359 functions as the Proton acceptor in the catalytic mechanism. The UDP-N-acetyl-alpha-D-glucosamine site is built by tyrosine 362 and asparagine 373. Acetyl-CoA-binding positions include alanine 376, 382–383, serine 401, alanine 419, and arginine 436; that span reads NY.

This sequence in the N-terminal section; belongs to the N-acetylglucosamine-1-phosphate uridyltransferase family. It in the C-terminal section; belongs to the transferase hexapeptide repeat family. Homotrimer. It depends on Mg(2+) as a cofactor.

Its subcellular location is the cytoplasm. It carries out the reaction alpha-D-glucosamine 1-phosphate + acetyl-CoA = N-acetyl-alpha-D-glucosamine 1-phosphate + CoA + H(+). The catalysed reaction is N-acetyl-alpha-D-glucosamine 1-phosphate + UTP + H(+) = UDP-N-acetyl-alpha-D-glucosamine + diphosphate. Its pathway is nucleotide-sugar biosynthesis; UDP-N-acetyl-alpha-D-glucosamine biosynthesis; N-acetyl-alpha-D-glucosamine 1-phosphate from alpha-D-glucosamine 6-phosphate (route II): step 2/2. It functions in the pathway nucleotide-sugar biosynthesis; UDP-N-acetyl-alpha-D-glucosamine biosynthesis; UDP-N-acetyl-alpha-D-glucosamine from N-acetyl-alpha-D-glucosamine 1-phosphate: step 1/1. It participates in bacterial outer membrane biogenesis; LPS lipid A biosynthesis. Functionally, catalyzes the last two sequential reactions in the de novo biosynthetic pathway for UDP-N-acetylglucosamine (UDP-GlcNAc). The C-terminal domain catalyzes the transfer of acetyl group from acetyl coenzyme A to glucosamine-1-phosphate (GlcN-1-P) to produce N-acetylglucosamine-1-phosphate (GlcNAc-1-P), which is converted into UDP-GlcNAc by the transfer of uridine 5-monophosphate (from uridine 5-triphosphate), a reaction catalyzed by the N-terminal domain. The polypeptide is Bifunctional protein GlmU (Thermodesulfovibrio yellowstonii (strain ATCC 51303 / DSM 11347 / YP87)).